Consider the following 170-residue polypeptide: uncharacterized protein (170 aa).

The chain crosses the membrane as a helical span at residues 7–27 (LVELLIGLAIISIALNFAVPL).

The protein resides in the membrane. This is an uncharacterized protein from Haemophilus influenzae (strain ATCC 51907 / DSM 11121 / KW20 / Rd).